The chain runs to 145 residues: UPF0179 protein TV1250 (145 aa).

It belongs to the UPF0179 family.

This Thermoplasma volcanium (strain ATCC 51530 / DSM 4299 / JCM 9571 / NBRC 15438 / GSS1) protein is UPF0179 protein TV1250.